A 197-amino-acid polypeptide reads, in one-letter code: HTH-type transcriptional regulator BetI (197 aa).

In terms of domain architecture, HTH tetR-type spans 8 to 68; sequence PIRRQQLIEA…ATMRYLMNAL (61 aa). The H-T-H motif DNA-binding region spans 31 to 50; that stretch reads SIALIARLAGVSNGIISHYF.

The protein operates within amine and polyamine biosynthesis; betaine biosynthesis via choline pathway [regulation]. Repressor involved in the biosynthesis of the osmoprotectant glycine betaine. It represses transcription of the choline transporter BetT and the genes of BetAB involved in the synthesis of glycine betaine. The chain is HTH-type transcriptional regulator BetI from Pseudomonas fluorescens (strain SBW25).